The chain runs to 809 residues: Lethal factor (809 aa).

The signal sequence occupies residues 1–33 (MNIKKEFIKVISMSCLVTAITLSGPVFIPLVQG). Residues 39–66 (DVGMHVKEKEKNKDENKRKDEERNKTQE) are disordered. The span at 40–66 (VGMHVKEKEKNKDENKRKDEERNKTQE) shows a compositional bias: basic and acidic residues. An i; PA-binding region region spans residues 60–295 (ERNKTQEEHL…NLSLEELKDQ (236 aa)). In terms of domain architecture, ATLF-like 1 spans 70 to 282 (KEIMKHIVKI…AFNYMDKFNE (213 aa)). The segment at 296–330 (RMLARYEKWEKIKQHYQHWSDSLSEEGRGLLKKLQ) is IIA. 5 tandem repeats follow at residues 315 to 333 (SDSL…QIPI), 342 to 357 (HSLS…RIQI), 360 to 378 (SDFL…QIDI), 380 to 397 (DSLS…QVDS), and 399 to 416 (NPLS…KLDI). The interval 315 to 416 (SDSLSEEGRG…EFLKKLKLDI (102 aa)) is 5 X approximate repeats. The segment at 336 to 416 (KKDDIIHSLS…EFLKKLKLDI (81 aa)) is III. An IIB region spans residues 420-583 (DINQRLQDTG…EYIRIDAKVV (164 aa)). Residues 585-809 (KSKIDTKIQE…NDQIKFIINS (225 aa)) are IV. The 196-residue stretch at 609–804 (LPKYTKLITF…TFQFINDQIK (196 aa)) folds into the ATLF-like 2 domain. Histidine 719 contributes to the Zn(2+) binding site. Catalysis depends on glutamate 720, which acts as the Proton acceptor. Residues histidine 723, tyrosine 761, and glutamate 768 each contribute to the Zn(2+) site.

It belongs to the peptidase M34 family. As to quaternary structure, interacts (via ATLF domain 1) with the cleaved form of protective antigen (PA-63) anthrax toxin; interaction is required for LF translocation into the host cytoplasm. Interacts with PA-63 homooligomers (either homoheptamers or homooctamers): three molecules of LF bind the PA-63 homoheptamer to form the PA(7)LF(3) complex, in which the relative position of the N-terminal alpha-helices in the three LFs determines which factor is translocated first. Requires Zn(2+) as cofactor.

It is found in the secreted. The protein localises to the host cytoplasm. The protein resides in the host cytosol. The catalysed reaction is Preferred amino acids around the cleavage site can be denoted BBBBxHx-|-H, in which B denotes Arg or Lys, H denotes a hydrophobic amino acid, and x is any amino acid. The only known protein substrates are mitogen-activated protein (MAP) kinase kinases.. Its activity is regulated as follows. Inhibited by NSC-12155 (1,3-Bis(2-methyl-4-aminoquinoline-6-yl)ure). Inhibited by phenoxyacetic acid bearing alpha-benzyl substituents on the C2-side chain. Inhibited by sulfonamide hydroxamate with benzylic additions at the sulfonamide nitrogen. Also inhibited by sulfonamide hydroxamates with alkylation at the sulfonamide nitrogen. Inhibited by hydroxamic acid inhibitors. Lethal factor (LF), which constitutes one of the three proteins composing the anthrax toxin, is able to trigger rapid cell death in macrophages. Acts as a protease that cleaves the N-terminal of most dual specificity mitogen-activated protein kinase kinases (MAPKKs or MAP2Ks) (except for MAP2K5): cleavage invariably occurs within the N-terminal proline-rich region preceding the kinase domain, thus disrupting a sequence involved in directing specific protein-protein interactions necessary for the assembly of signaling complexes. Also cleaves mouse Nlrp1b: host Nlrp1b cleavage promotes ubiquitination and degradation of the N-terminal part of Nlrp1b by the proteasome, thereby releasing the cleaved C-terminal part of Nlrp1b, which polymerizes and forms the Nlrp1b inflammasome followed by host cell pyroptosis. Able to cleave mouse Nlrp1b alleles 1 and 5, while it is not able to cleave Nlrp1b alleles 2, 3 and 4. In contrast, does not cleave NLRP1 human ortholog. LF is not toxic by itself and only acts as a lethal factor when associated with protective antigen (PA) to form the lethal toxin (LeTx): PA is required for LF translocation into the host cytosol. The sequence is that of Lethal factor from Bacillus anthracis.